We begin with the raw amino-acid sequence, 169 residues long: Peptide deformylase (169 aa).

Residues C91 and H133 each coordinate Fe cation. E134 is an active-site residue. Position 137 (H137) interacts with Fe cation.

It belongs to the polypeptide deformylase family. Fe(2+) serves as cofactor.

It carries out the reaction N-terminal N-formyl-L-methionyl-[peptide] + H2O = N-terminal L-methionyl-[peptide] + formate. Its function is as follows. Removes the formyl group from the N-terminal Met of newly synthesized proteins. Requires at least a dipeptide for an efficient rate of reaction. N-terminal L-methionine is a prerequisite for activity but the enzyme has broad specificity at other positions. In Haemophilus influenzae (strain 86-028NP), this protein is Peptide deformylase.